The chain runs to 639 residues: Far upstream element-binding protein 1 (639 aa).

Disordered regions lie at residues 1 to 27 (MADY…NDAF) and 40 to 88 (KIGG…LPPM). A2 carries the post-translational modification N-acetylalanine. Residues 14-23 (SAGGGGGGGV) show a composition bias toward gly residues. Residues S48 and S51 each carry the phosphoserine modification. The span at 61–73 (RPLEDGDQPDAKK) shows a compositional bias: basic and acidic residues. KH domains lie at 95-159 (VMTE…KRLL), 180-246 (NAVQ…KEMV), and 270-334 (NEGI…AEII). At S135 the chain carries Phosphoserine. T148 carries the post-translational modification Phosphothreonine. Omega-N-methylarginine is present on residues R316, R354, R356, and R358. The segment at 341-360 (VQAGNPGGPGPGGRGRGRGQ) is disordered. The segment covering 345–360 (NPGGPGPGGRGRGRGQ) has biased composition (gly residues). Positions 371–438 (LQEFNFIVPT…QQIDYARQLI (68 aa)) constitute a KH 4 domain. T427 is modified (phosphothreonine). Disordered regions lie at residues 442–527 (IGGP…GTDP) and 543–574 (QAQP…PAGQ). Over residues 463 to 500 (PHGPPGPPGPGTPMGPYNPAPYNPGPPGPAPHGPPAPY) the composition is skewed to pro residues. The span at 551–568 (PAGAPTTTQTNGQGDQQN) shows a compositional bias: low complexity. A Phosphoserine modification is found at S625.

In terms of assembly, found in a complex with PUF60 and far upstream element (FUSE) DNA segment. Interacts with PUF60 and JTV1. Post-translationally, ubiquitinated. This targets the protein for proteasome-mediated degradation.

Its subcellular location is the nucleus. Regulates MYC expression by binding to a single-stranded far-upstream element (FUSE) upstream of the MYC promoter. May act both as activator and repressor of transcription. The protein is Far upstream element-binding protein 1 of Rattus norvegicus (Rat).